Reading from the N-terminus, the 779-residue chain is Putative helicase V13 (779 aa).

The region spanning 477–642 (DNPKPFITSL…FVKEEELNEK (166 aa)) is the SF3 helicase domain. 504–511 (GKSNAGKS) is a binding site for ATP.

In Acanthamoeba polyphaga (Amoeba), this protein is Putative helicase V13.